A 93-amino-acid chain; its full sequence is MPRSLKKGPYVNYKLIKKIILNNLNLKKKKIIKTWSRSSTITPEFIGNTIAVHNGKIFIPIYISENMVGHKLGEFAPTRIFRGHSGSKKKPKK.

Belongs to the universal ribosomal protein uS19 family.

Functionally, protein S19 forms a complex with S13 that binds strongly to the 16S ribosomal RNA. The protein is Small ribosomal subunit protein uS19 of Karelsulcia muelleri (strain GWSS) (Sulcia muelleri).